The sequence spans 312 residues: MDIIFYHPTFDTQWWIKALRKAIPQARVRAWKSGDNDSADYALVWHPPVEMLAGRDLKAVFALGAGVDSILSKLQAHPEMLNPYVPLFRLEDTGMGEQMQEYAVSQVLHWFRRFDDYRIQQNSSHWQPLPEYYREDFTIGILGAGVLGSKVAQSLQTWRFPLRCWSRTRKSWPGVQSFAGREELSAFLSQCRVLINLLPNTPETVGIINQQLLEKLPDGAYLLNLARGVHVVEDDLLAALDSGKVKGAMLDVFNREPLPPESPLWQHPRVTITPHVAAITRPAEAVEYISRTIAQLEKGERVCGQVDRARGY.

Arginine 227 is an active-site residue. The active-site Proton donor is histidine 275.

The protein belongs to the D-isomer specific 2-hydroxyacid dehydrogenase family. GhrA subfamily.

It localises to the cytoplasm. It carries out the reaction glycolate + NADP(+) = glyoxylate + NADPH + H(+). It catalyses the reaction (R)-glycerate + NAD(+) = 3-hydroxypyruvate + NADH + H(+). The catalysed reaction is (R)-glycerate + NADP(+) = 3-hydroxypyruvate + NADPH + H(+). Catalyzes the NADPH-dependent reduction of glyoxylate and hydroxypyruvate into glycolate and glycerate, respectively. The protein is Glyoxylate/hydroxypyruvate reductase A of Shigella dysenteriae serotype 1 (strain Sd197).